A 573-amino-acid chain; its full sequence is Putative cytochrome c oxidase subunit 1-beta (573 aa).

A helical membrane pass occupies residues 53 to 73; sequence VIGHLYLATSFGFFLLGGVLA. His100 lines the Fe(II)-heme a pocket. The next 6 helical transmembrane spans lie at 103 to 123, 141 to 161, 188 to 208, 227 to 247, 272 to 292, and 304 to 324; these read IMMLLFATPLFAGFTNVIMPL, WMYLFGGLMVVSGFLTPGGAA, GLVVSGVSTTLSAVNFISTII, ILFTSILVLPAFPVLTAALLM, LFWFFGHPEVYIVALPFFGIV, and IFGYVSLVGATIAITFLSAVV. His278 and Tyr282 together coordinate Cu cation. Positions 278–282 form a cross-link, 1'-histidyl-3'-tyrosine (His-Tyr); it reads HPEVY. Positions 327 and 328 each coordinate Cu cation. The next 2 membrane-spanning stretches (helical) occupy residues 329-349 and 373-393; these read MFATGAVLLPFFSLMSFLIAV and MLWACGFLVTFLLGGMSGVLI. A heme a3-binding site is contributed by His411. The next 3 membrane-spanning stretches (helical) occupy residues 412 to 432, 447 to 467, and 490 to 510; these read LHYVLFGTVVFAMFAGFYFWW, IHFWTLFVGFQTTFLVQHWLG, and ISSIGAFLLGLSTLPFLYNVW. His413 contributes to the Fe(II)-heme a binding site.

The protein belongs to the heme-copper respiratory oxidase family. In terms of assembly, associates with subunits II, III and IV to form cytochrome c oxidase. The cofactor is Cu(2+). Heme serves as cofactor.

It localises to the cell membrane. The enzyme catalyses 4 Fe(II)-[cytochrome c] + O2 + 8 H(+)(in) = 4 Fe(III)-[cytochrome c] + 2 H2O + 4 H(+)(out). It participates in energy metabolism; oxidative phosphorylation. Cytochrome c oxidase is the component of the respiratory chain that catalyzes the reduction of oxygen to water. Subunits 1-3 form the functional core of the enzyme complex. CO I is the catalytic subunit of the enzyme. Electrons originating in cytochrome c are transferred via the copper A center of subunit 2 and heme A of subunit 1 to the bimetallic center formed by heme A3 and copper B. The chain is Putative cytochrome c oxidase subunit 1-beta (ctaD2) from Streptomyces coelicolor (strain ATCC BAA-471 / A3(2) / M145).